The following is a 227-amino-acid chain: Protein M1425_1941 (227 aa).

The 195-residue stretch at 15–209 (EIGRFLIEIA…ETRPDGSDII (195 aa)) folds into the AMMECR1 domain.

The protein is Protein M1425_1941 of Saccharolobus islandicus (strain M.14.25 / Kamchatka #1) (Sulfolobus islandicus).